The primary structure comprises 467 residues: UDP-N-acetylmuramate--L-alanine ligase (467 aa).

114 to 120 (GTHGKTT) is a binding site for ATP.

This sequence belongs to the MurCDEF family.

It localises to the cytoplasm. It catalyses the reaction UDP-N-acetyl-alpha-D-muramate + L-alanine + ATP = UDP-N-acetyl-alpha-D-muramoyl-L-alanine + ADP + phosphate + H(+). It functions in the pathway cell wall biogenesis; peptidoglycan biosynthesis. Cell wall formation. This chain is UDP-N-acetylmuramate--L-alanine ligase, found in Rhodopseudomonas palustris (strain BisB18).